We begin with the raw amino-acid sequence, 199 residues long: Charged multivesicular body protein 1b (199 aa).

Residues 26-48 are a coiled coil; it reads DKEEKAEKAKIKKAIQKGNMEVA. The interval 132-156 is interaction with IST1; sequence MEDTMSSTTTLTTPQNQVDMLLQEM. Residues 167-199 are disordered; sequence ELPQGQTGSVGTSVASAEQDELSQRLARLRDQV. Over residues 170-182 the composition is skewed to polar residues; sequence QGQTGSVGTSVAS. The interaction with SPAST stretch occupies residues 174–199; sequence GSVGTSVASAEQDELSQRLARLRDQV. Residues 178 to 199 are a coiled coil; sequence TSVASAEQDELSQRLARLRDQV. The interval 180-196 is interaction with VPS4A, MITD1 and STAMBP; the sequence is VASAEQDELSQRLARLR. The interaction with VTA1 stretch occupies residues 180–199; it reads VASAEQDELSQRLARLRDQV. The interval 183–199 is interaction with VPS4B; sequence AEQDELSQRLARLRDQV. The short motif at 186–196 is the MIT-interacting motif element; that stretch reads DELSQRLARLR.

The protein belongs to the SNF7 family. As to quaternary structure, probable peripherally associated component of the endosomal sorting required for transport complex III (ESCRT-III). ESCRT-III components are thought to multimerize to form a flat lattice on the perimeter membrane of the endosome. Several assembly forms of ESCRT-III may exist that interact and act sequentially. Interacts with CHMP1A. Interacts with VTA1; the interaction probably involves the open conformation of CHMP1B. Interacts with CHMP2A. Interacts with VPS4A; the interaction is direct. Interacts with VPS4B; the interaction is direct. Interacts with SPAST (via MIT domain); the interaction is direct. Interacts with IST1. Interacts with MITD1. Interacts with STAMBP. In terms of tissue distribution, widely expressed. Expressed in pancreas, kidney, skeletal muscle, liver, lung, placenta and brain.

Its subcellular location is the cytoplasm. It localises to the cytosol. The protein localises to the endosome. The protein resides in the late endosome membrane. Its function is as follows. Probable peripherally associated component of the endosomal sorting required for transport complex III (ESCRT-III) which is involved in multivesicular bodies (MVBs) formation and sorting of endosomal cargo proteins into MVBs. MVBs contain intraluminal vesicles (ILVs) that are generated by invagination and scission from the limiting membrane of the endosome and mostly are delivered to lysosomes enabling degradation of membrane proteins, such as stimulated growth factor receptors, lysosomal enzymes and lipids. The MVB pathway appears to require the sequential function of ESCRT-O, -I,-II and -III complexes. ESCRT-III proteins mostly dissociate from the invaginating membrane before the ILV is released. The ESCRT machinery also functions in topologically equivalent membrane fission events, such as the terminal stages of cytokinesis and the budding of enveloped viruses (HIV-1 and other lentiviruses). ESCRT-III proteins are believed to mediate the necessary vesicle extrusion and/or membrane fission activities, possibly in conjunction with the AAA ATPase VPS4. Involved in cytokinesis. Involved in recruiting VPS4A and/or VPS4B and SPAST to the midbody of dividing cells. Involved in HIV-1 p6- and p9-dependent virus release. This is Charged multivesicular body protein 1b (CHMP1B) from Homo sapiens (Human).